Consider the following 294-residue polypeptide: Probable 2-(5''-triphosphoribosyl)-3'-dephosphocoenzyme-A synthase (294 aa).

Belongs to the CitG/MdcB family.

It carries out the reaction 3'-dephospho-CoA + ATP = 2'-(5''-triphospho-alpha-D-ribosyl)-3'-dephospho-CoA + adenine. The sequence is that of Probable 2-(5''-triphosphoribosyl)-3'-dephosphocoenzyme-A synthase from Streptococcus equi subsp. zooepidemicus (strain MGCS10565).